Reading from the N-terminus, the 318-residue chain is L-malyl-CoA/beta-methylmalyl-CoA lyase (318 aa).

Substrate contacts are provided by Phe19, Arg24, Lys30, and Arg76. Mg(2+) contacts are provided by Glu141 and Asp168. Residues 167 to 168 and 251 to 252 contribute to the substrate site; these read AD and IH.

The protein belongs to the HpcH/HpaI aldolase family. As to quaternary structure, homohexamer. Dimer of trimers. Requires Mg(2+) as cofactor. It depends on Mn(2+) as a cofactor.

The enzyme catalyses (S)-malyl-CoA = glyoxylate + acetyl-CoA. It carries out the reaction (2R,3S)-beta-methylmalyl-CoA = propanoyl-CoA + glyoxylate. Its activity is regulated as follows. In vitro inhibited by EDTA. Its function is as follows. Involved in the ethylmalonyl-CoA pathway for acetate assimilation. Catalyzes the reversible condensation of glyoxylate and acetyl-CoA to L-malyl-CoA and the reversible condensation of glyoxylate and propionyl-CoA to beta-methylmalyl-CoA. This is L-malyl-CoA/beta-methylmalyl-CoA lyase from Rhodobacter capsulatus (Rhodopseudomonas capsulata).